A 158-amino-acid polypeptide reads, in one-letter code: Pyruvoyl-dependent arginine decarboxylase (158 aa).

Ser44 is subject to Pyruvic acid (Ser).

It belongs to the PdaD family. Pyruvate is required as a cofactor.

It catalyses the reaction L-arginine + H(+) = agmatine + CO2. In Pyrococcus furiosus (strain ATCC 43587 / DSM 3638 / JCM 8422 / Vc1), this protein is Pyruvoyl-dependent arginine decarboxylase.